The sequence spans 138 residues: D-ribose pyranase (138 aa).

The active-site Proton donor is the H20. Substrate is bound by residues D28, H105, and 127-129 (YAN).

Belongs to the RbsD / FucU family. RbsD subfamily. As to quaternary structure, homodecamer.

Its subcellular location is the cytoplasm. It catalyses the reaction beta-D-ribopyranose = beta-D-ribofuranose. It functions in the pathway carbohydrate metabolism; D-ribose degradation; D-ribose 5-phosphate from beta-D-ribopyranose: step 1/2. In terms of biological role, catalyzes the interconversion of beta-pyran and beta-furan forms of D-ribose. The sequence is that of D-ribose pyranase from Psychromonas ingrahamii (strain DSM 17664 / CCUG 51855 / 37).